The chain runs to 79 residues: Translational regulator CsrA (79 aa).

It belongs to the CsrA/RsmA family. As to quaternary structure, homodimer; the beta-strands of each monomer intercalate to form a hydrophobic core, while the alpha-helices form wings that extend away from the core.

The protein localises to the cytoplasm. In terms of biological role, a translational regulator that binds mRNA to regulate translation initiation and/or mRNA stability. Usually binds in the 5'-UTR at or near the Shine-Dalgarno sequence preventing ribosome-binding, thus repressing translation. Its main target seems to be the major flagellin gene, while its function is anatagonized by FliW. This Helicobacter hepaticus (strain ATCC 51449 / 3B1) protein is Translational regulator CsrA.